We begin with the raw amino-acid sequence, 384 residues long: Shufflon-specific DNA recombinase (384 aa).

A Core-binding (CB) domain is found at 9–96 (MSLSRALDKY…LLSSLFNIAR (88 aa)). In terms of domain architecture, Tyr recombinase spans 118-284 (GRDRRLTSSE…RAWQLVSKLD (167 aa)). Residues R155, K180, H235, R238, and H262 contribute to the active site. The O-(3'-phospho-DNA)-tyrosine intermediate role is filled by Y271.

The protein belongs to the 'phage' integrase family.

Its function is as follows. Shufflon-specific DNA recombinase. This is Shufflon-specific DNA recombinase (rci) from Escherichia coli.